The following is a 170-amino-acid chain: UPF0260 protein RPB_3505 (170 aa).

Belongs to the UPF0260 family.

The chain is UPF0260 protein RPB_3505 from Rhodopseudomonas palustris (strain HaA2).